The following is a 306-amino-acid chain: UDP-N-acetylenolpyruvoylglucosamine reductase (306 aa).

The region spanning 28-194 (KIGNISKLFL…LKTELNLKKE (167 aa)) is the FAD-binding PCMH-type domain. Residue S223 is the Proton donor of the active site. E295 is a catalytic residue.

Belongs to the MurB family. The cofactor is FAD.

The protein resides in the cytoplasm. It carries out the reaction UDP-N-acetyl-alpha-D-muramate + NADP(+) = UDP-N-acetyl-3-O-(1-carboxyvinyl)-alpha-D-glucosamine + NADPH + H(+). Its pathway is cell wall biogenesis; peptidoglycan biosynthesis. Its function is as follows. Cell wall formation. In Borrelia garinii subsp. bavariensis (strain ATCC BAA-2496 / DSM 23469 / PBi) (Borreliella bavariensis), this protein is UDP-N-acetylenolpyruvoylglucosamine reductase.